We begin with the raw amino-acid sequence, 201 residues long: Recombination protein RecR (201 aa).

Residues 60–75 form a C4-type zinc finger; sequence CSCCGNVDTIDPCTVC. The Toprim domain maps to 83 to 178; it reads AVIIVVEDVA…RITRLAHGVP (96 aa).

Belongs to the RecR family.

Its function is as follows. May play a role in DNA repair. It seems to be involved in an RecBC-independent recombinational process of DNA repair. It may act with RecF and RecO. The chain is Recombination protein RecR from Sinorhizobium medicae (strain WSM419) (Ensifer medicae).